Consider the following 144-residue polypeptide: Aklanonic acid methyl ester cyclase AcmA (144 aa).

N51 and Q105 together coordinate substrate.

It belongs to the polyketide cyclase DnrD family. As to quaternary structure, homotetramer.

It carries out the reaction methyl aklanonate = aklaviketone. Its pathway is antibiotic biosynthesis; daunorubicin biosynthesis. It functions in the pathway antibiotic biosynthesis; carminomycin biosynthesis. The protein operates within antibiotic biosynthesis; rhodomycin biosynthesis. It participates in antibiotic biosynthesis; aclacinomycin biosynthesis. In terms of biological role, involved in the biosynthesis of aklavinone which is an important precursor common to the formation of the clinically significant anthracyclines such as carminomycin, daunorubicin (daunomycin), rhodomycin, aclacinomycin T (aklavin) and aclacinomycin A (aclarubicin). These compounds are aromatic polyketide antibiotics that exhibit high cytotoxicity and are widely applied in the chemotherapy of a variety of cancers. Catalyzes the cyclization of aklanonic acid methyl ester to yield aklaviketone. It is also able to use nogalonic acid methyl ester as substrate, but produces exclusively auraviketone with C9-R stereochemistry. The polypeptide is Aklanonic acid methyl ester cyclase AcmA (acma) (Streptomyces galilaeus).